The chain runs to 279 residues: L-ascorbate peroxidase 5, peroxisomal (279 aa).

The active-site Proton acceptor is His-39. The segment at 111-134 is disordered; the sequence is PFTPGRKDADSADDGELPNPNEGA. His-158 is a heme b binding site. The K(+) site is built by Thr-159, Thr-175, and Asp-182. The helical transmembrane segment at 251–271 threads the bilayer; sequence AVTQQTLGIAVAAAVVIFTIC. An AKR2A-binding sequence (ABS) required for peroxisome membrane targeting motif is present at residues 272-279; sequence YEASRRGK.

Belongs to the peroxidase family. Ascorbate peroxidase subfamily. Interacts with AKR2A and AKR2B. Requires heme b as cofactor.

It is found in the peroxisome membrane. The enzyme catalyses L-ascorbate + H2O2 = L-dehydroascorbate + 2 H2O. In terms of biological role, plays a key role in hydrogen peroxide removal. The polypeptide is L-ascorbate peroxidase 5, peroxisomal (APX5) (Arabidopsis thaliana (Mouse-ear cress)).